The following is a 692-amino-acid chain: Methionine--tRNA ligase (692 aa).

The 'HIGH' region motif lies at 12–22; the sequence is PYANGPLHLGH. The Zn(2+) site is built by Cys-143, Cys-146, Cys-156, and Cys-159. The 'KMSKS' region motif lies at 330-334; that stretch reads KMSKS. Position 333 (Lys-333) interacts with ATP. Positions 554-563 are enriched in low complexity; that stretch reads AAAAPAAKPA. Positions 554–575 are disordered; it reads AAAAPAAKPAAPAPAPAPAKDE. In terms of domain architecture, tRNA-binding spans 589–692; sequence DFAKLDLRIG…SGAQPGMPVR (104 aa).

This sequence belongs to the class-I aminoacyl-tRNA synthetase family. MetG type 1 subfamily. In terms of assembly, homodimer. Zn(2+) is required as a cofactor.

It is found in the cytoplasm. The catalysed reaction is tRNA(Met) + L-methionine + ATP = L-methionyl-tRNA(Met) + AMP + diphosphate. In terms of biological role, is required not only for elongation of protein synthesis but also for the initiation of all mRNA translation through initiator tRNA(fMet) aminoacylation. This is Methionine--tRNA ligase from Stenotrophomonas maltophilia (strain K279a).